The chain runs to 310 residues: Alpha/beta hydrolase domain-containing protein 17A (310 aa).

Positions 38-61 (VPEPEPGPGGAGAAPSGPLRTSAA) are disordered. Catalysis depends on charge relay system residues S190, D255, and H284. S307 bears the Phosphoserine mark.

It belongs to the AB hydrolase superfamily. ABHD17 family. Palmitoylated on cysteine residues located in a cysteine cluster at the N-terminus which promotes membrane localization. Palmitoylation is required for post-synaptic localization and for depalmitoylating activity towards DLG4/PSD95. Expressed in brain (at protein level). Expressed in hippocampal neurons.

It localises to the cell membrane. The protein resides in the recycling endosome membrane. It is found in the cell projection. The protein localises to the dendritic spine. Its subcellular location is the postsynaptic density membrane. It catalyses the reaction S-hexadecanoyl-L-cysteinyl-[protein] + H2O = L-cysteinyl-[protein] + hexadecanoate + H(+). Hydrolyzes fatty acids from S-acylated cysteine residues in proteins. Has depalmitoylating activity towards NRAS. Has depalmitoylating activity towards DLG4/PSD95. May have depalmitoylating activity towards MAP6. The polypeptide is Alpha/beta hydrolase domain-containing protein 17A (Rattus norvegicus (Rat)).